Reading from the N-terminus, the 323-residue chain is tRNA U34 carboxymethyltransferase (323 aa).

Carboxy-S-adenosyl-L-methionine contacts are provided by residues Lys-91, Trp-105, Lys-110, Gly-130, 181 to 182, Met-196, Tyr-200, and Arg-315; that span reads IE.

The protein belongs to the class I-like SAM-binding methyltransferase superfamily. CmoB family. Homotetramer.

It catalyses the reaction carboxy-S-adenosyl-L-methionine + 5-hydroxyuridine(34) in tRNA = 5-carboxymethoxyuridine(34) in tRNA + S-adenosyl-L-homocysteine + H(+). In terms of biological role, catalyzes carboxymethyl transfer from carboxy-S-adenosyl-L-methionine (Cx-SAM) to 5-hydroxyuridine (ho5U) to form 5-carboxymethoxyuridine (cmo5U) at position 34 in tRNAs. The chain is tRNA U34 carboxymethyltransferase from Yersinia pseudotuberculosis serotype O:3 (strain YPIII).